The sequence spans 515 residues: Iridoid oxidase (515 aa).

The next 2 helical transmembrane spans lie at 8–28 and 180–200; these read SLNP…IIFV and AVQL…NLML. Cysteine 455 serves as a coordination point for heme.

It belongs to the cytochrome P450 family. As to expression, expressed in the leaf internal phloem-associated parenchyma (IPAP) inside the mesophyll.

Its subcellular location is the endoplasmic reticulum membrane. It catalyses the reaction (+)-cis-trans-nepetalactol + 3 reduced [NADPH--hemoprotein reductase] + 3 O2 = 7-deoxyloganetate + 3 oxidized [NADPH--hemoprotein reductase] + 4 H2O + 4 H(+). It functions in the pathway alkaloid biosynthesis. Its function is as follows. Component of the seco-iridoid and derivatives monoterpenoid indole alkaloids (MIAs, e.g. vincristine, quinine, and strychnine) biosynthesis pathway. Catalyzes the conversion of cis-trans-nepetalactol (iridodial) into 7-deoxyloganetic acid. Also converts iridotrial into 7-deoxyloganetic acid. This is Iridoid oxidase from Catharanthus roseus (Madagascar periwinkle).